A 168-amino-acid polypeptide reads, in one-letter code: Putative F-box protein At1g30945 (168 aa).

The F-box domain maps to 5-52 (KTFDSISNDLFLEILLRLSTKSIDRSRCVSKQWASILCSQDFTESEKF).

This Arabidopsis thaliana (Mouse-ear cress) protein is Putative F-box protein At1g30945.